Reading from the N-terminus, the 415-residue chain is Serine hydroxymethyltransferase (415 aa).

(6S)-5,6,7,8-tetrahydrofolate-binding positions include Leu121 and 125–127 (GHL). Lys229 bears the N6-(pyridoxal phosphate)lysine mark.

The protein belongs to the SHMT family. In terms of assembly, homodimer. Requires pyridoxal 5'-phosphate as cofactor.

Its subcellular location is the cytoplasm. It carries out the reaction (6R)-5,10-methylene-5,6,7,8-tetrahydrofolate + glycine + H2O = (6S)-5,6,7,8-tetrahydrofolate + L-serine. The protein operates within one-carbon metabolism; tetrahydrofolate interconversion. It participates in amino-acid biosynthesis; glycine biosynthesis; glycine from L-serine: step 1/1. In terms of biological role, catalyzes the reversible interconversion of serine and glycine with tetrahydrofolate (THF) serving as the one-carbon carrier. This reaction serves as the major source of one-carbon groups required for the biosynthesis of purines, thymidylate, methionine, and other important biomolecules. Also exhibits THF-independent aldolase activity toward beta-hydroxyamino acids, producing glycine and aldehydes, via a retro-aldol mechanism. The chain is Serine hydroxymethyltransferase from Bordetella petrii (strain ATCC BAA-461 / DSM 12804 / CCUG 43448).